The primary structure comprises 114 residues: uncharacterized protein (114 aa).

Transmembrane regions (helical) follow at residues 58–78 (CLLGVGAVGTFISTFPQFFLL) and 94–114 (SISYAASAIFSFSIFFFFCLA).

It localises to the membrane. This is an uncharacterized protein from Saccharomyces cerevisiae (strain ATCC 204508 / S288c) (Baker's yeast).